A 100-amino-acid chain; its full sequence is Small ribosomal subunit protein uS14c (100 aa).

It belongs to the universal ribosomal protein uS14 family. Part of the 30S ribosomal subunit.

Its subcellular location is the plastid. The protein localises to the chloroplast. In terms of biological role, binds 16S rRNA, required for the assembly of 30S particles. The chain is Small ribosomal subunit protein uS14c from Pelargonium hortorum (Common geranium).